The sequence spans 731 residues: 1,4-alpha-glucan branching enzyme GlgB (731 aa).

Residue Asp412 is the Nucleophile of the active site. Glu465 (proton donor) is an active-site residue.

This sequence belongs to the glycosyl hydrolase 13 family. GlgB subfamily. Monomer.

It catalyses the reaction Transfers a segment of a (1-&gt;4)-alpha-D-glucan chain to a primary hydroxy group in a similar glucan chain.. The protein operates within glycan biosynthesis; glycogen biosynthesis. Its function is as follows. Catalyzes the formation of the alpha-1,6-glucosidic linkages in glycogen by scission of a 1,4-alpha-linked oligosaccharide from growing alpha-1,4-glucan chains and the subsequent attachment of the oligosaccharide to the alpha-1,6 position. The sequence is that of 1,4-alpha-glucan branching enzyme GlgB from Bordetella parapertussis (strain 12822 / ATCC BAA-587 / NCTC 13253).